A 92-amino-acid polypeptide reads, in one-letter code: Small ribosomal subunit protein uS19 (92 aa).

It belongs to the universal ribosomal protein uS19 family.

Functionally, protein S19 forms a complex with S13 that binds strongly to the 16S ribosomal RNA. This Streptococcus agalactiae serotype Ia (strain ATCC 27591 / A909 / CDC SS700) protein is Small ribosomal subunit protein uS19.